The chain runs to 407 residues: Schlafen-like protein 1 (407 aa).

2 disordered regions span residues 1–28 and 137–191; these read MTPM…LPEL and AQGP…CQGR. A compositionally biased stretch (low complexity) spans 155 to 167; it reads GLSPGPSPGSGVP. Positions 181–190 are enriched in polar residues; it reads QAQQLQSCQG. ATP is bound at residue 261 to 268; that stretch reads GVEDSGLV. The stretch at 366-398 forms a coiled coil; it reads RQRWLVELGKLEEKMKALMMEKEQLQQQLQQHG.

Belongs to the Schlafen family. Subgroup I subfamily.

This is Schlafen-like protein 1 (SLFNL1) from Homo sapiens (Human).